A 485-amino-acid chain; its full sequence is NADH-quinone oxidoreductase subunit N (485 aa).

The next 14 helical transmembrane spans lie at 8 to 28 (LIAL…MLSI), 35 to 55 (FLNA…LWFV), 71 to 91 (GFAM…CTFA), 105 to 125 (FYLL…ANHL), 127 to 147 (ALFL…GYAF), 159 to 179 (YTIL…LVYA), 203 to 223 (LLAG…LVPF), 235 to 255 (PAPV…GVVM), 271 to 291 (VVLG…ALSQ), 297 to 317 (LLGY…IVLQ), 326 to 346 (VGVY…VVSL), 373 to 393 (AAVM…LGFI), 408 to 430 (WWLV…RVAV), and 455 to 475 (IVVL…QPLI).

Belongs to the complex I subunit 2 family. In terms of assembly, NDH-1 is composed of 13 different subunits. Subunits NuoA, H, J, K, L, M, N constitute the membrane sector of the complex.

The protein localises to the cell inner membrane. It carries out the reaction a quinone + NADH + 5 H(+)(in) = a quinol + NAD(+) + 4 H(+)(out). Functionally, NDH-1 shuttles electrons from NADH, via FMN and iron-sulfur (Fe-S) centers, to quinones in the respiratory chain. The immediate electron acceptor for the enzyme in this species is believed to be ubiquinone. Couples the redox reaction to proton translocation (for every two electrons transferred, four hydrogen ions are translocated across the cytoplasmic membrane), and thus conserves the redox energy in a proton gradient. This is NADH-quinone oxidoreductase subunit N from Salmonella choleraesuis (strain SC-B67).